Here is a 259-residue protein sequence, read N- to C-terminus: 5'-nucleotidase SurE (259 aa).

A divalent metal cation contacts are provided by D8, D9, S40, and N92.

The protein belongs to the SurE nucleotidase family. A divalent metal cation is required as a cofactor.

The protein localises to the cytoplasm. It catalyses the reaction a ribonucleoside 5'-phosphate + H2O = a ribonucleoside + phosphate. Its function is as follows. Nucleotidase that shows phosphatase activity on nucleoside 5'-monophosphates. This Xanthomonas campestris pv. campestris (strain B100) protein is 5'-nucleotidase SurE.